Reading from the N-terminus, the 475-residue chain is Aspartyl/glutamyl-tRNA(Asn/Gln) amidotransferase subunit B (475 aa).

The protein belongs to the GatB/GatE family. GatB subfamily. In terms of assembly, heterotrimer of A, B and C subunits.

It carries out the reaction L-glutamyl-tRNA(Gln) + L-glutamine + ATP + H2O = L-glutaminyl-tRNA(Gln) + L-glutamate + ADP + phosphate + H(+). The catalysed reaction is L-aspartyl-tRNA(Asn) + L-glutamine + ATP + H2O = L-asparaginyl-tRNA(Asn) + L-glutamate + ADP + phosphate + 2 H(+). In terms of biological role, allows the formation of correctly charged Asn-tRNA(Asn) or Gln-tRNA(Gln) through the transamidation of misacylated Asp-tRNA(Asn) or Glu-tRNA(Gln) in organisms which lack either or both of asparaginyl-tRNA or glutaminyl-tRNA synthetases. The reaction takes place in the presence of glutamine and ATP through an activated phospho-Asp-tRNA(Asn) or phospho-Glu-tRNA(Gln). The sequence is that of Aspartyl/glutamyl-tRNA(Asn/Gln) amidotransferase subunit B from Thermodesulfovibrio yellowstonii (strain ATCC 51303 / DSM 11347 / YP87).